The following is a 430-amino-acid chain: Adenylosuccinate synthetase (430 aa).

Residues Gly-12 to Lys-18 and Gly-40 to Thr-42 contribute to the GTP site. Catalysis depends on Asp-13, which acts as the Proton acceptor. Mg(2+)-binding residues include Asp-13 and Gly-40. IMP contacts are provided by residues Asp-13–Lys-16, Asn-38–His-41, Thr-130, Arg-144, Gln-224, Thr-239, and Arg-303. The Proton donor role is filled by His-41. Thr-299 to Arg-305 provides a ligand contact to substrate. Residues Arg-305, Lys-331–Asp-333, and Ser-413–Ser-415 each bind GTP.

The protein belongs to the adenylosuccinate synthetase family. In terms of assembly, homodimer. Mg(2+) serves as cofactor.

It localises to the cytoplasm. It catalyses the reaction IMP + L-aspartate + GTP = N(6)-(1,2-dicarboxyethyl)-AMP + GDP + phosphate + 2 H(+). Its pathway is purine metabolism; AMP biosynthesis via de novo pathway; AMP from IMP: step 1/2. Functionally, plays an important role in the de novo pathway of purine nucleotide biosynthesis. Catalyzes the first committed step in the biosynthesis of AMP from IMP. The polypeptide is Adenylosuccinate synthetase (Ruegeria pomeroyi (strain ATCC 700808 / DSM 15171 / DSS-3) (Silicibacter pomeroyi)).